The following is a 1568-amino-acid chain: Plexin-C1 (1568 aa).

Residues 1 to 34 (MEVSRRKAPPRPPRPAAPLPLLAYLLALAAPGRG) form the signal peptide. Positions 35–452 (ADEPVWRSEQ…AGKEVRRIRV (418 aa)) constitute a Sema domain. Residues 35-944 (ADEPVWRSEQ…YVEQESVPST (910 aa)) lie on the Extracellular side of the membrane. Residues Cys-64 and Cys-87 are joined by a disulfide bond. N-linked (GlcNAc...) asparagine glycosylation is found at Asn-86, Asn-141, and Asn-149. Intrachain disulfides connect Cys-156–Cys-194, Cys-226–Cys-354, and Cys-283–Cys-329. N-linked (GlcNAc...) asparagine glycans are attached at residues Asn-241 and Asn-252. Residues Asn-386 and Asn-407 are each glycosylated (N-linked (GlcNAc...) asparagine). Cystine bridges form between Cys-455–Cys-472, Cys-461–Cys-506, Cys-464–Cys-481, and Cys-475–Cys-487. Asn-548, Asn-582, Asn-653, Asn-692, Asn-771, Asn-796, Asn-821, Asn-871, and Asn-890 each carry an N-linked (GlcNAc...) asparagine glycan. The helical transmembrane segment at 945-965 (WYFLIVLPVLLVIVIFAAVGV) threads the bilayer. Residues 966–1568 (TRHKSKELSR…FDEKKKCKWM (603 aa)) lie on the Cytoplasmic side of the membrane. The residue at position 978 (Ser-978) is a Phosphoserine.

It belongs to the plexin family. In terms of assembly, monomer. Homodimer. Interacts with SEMA7A. N-glycosylated. As to expression, detected in heart, brain, lung, spleen and placenta.

It localises to the membrane. Its function is as follows. Receptor for SEMA7A, for smallpox semaphorin A39R, vaccinia virus semaphorin A39R and for herpesvirus Sema protein. Binding of semaphorins triggers cellular responses leading to the rearrangement of the cytoskeleton and to secretion of IL6 and IL8. The protein is Plexin-C1 (PLXNC1) of Homo sapiens (Human).